Here is a 944-residue protein sequence, read N- to C-terminus: MDEASHLPNGSLKNMEFTPVGFIKSKRNTTQTQVVSPTKVPNANNGDENEGPVKKRQRRSIDDTIDSTRLFSEASQFDDSFPEIKANIPPSPRSGNVDKSRKRNLIDDLKKDVPMSQPLKEQEVREHQMKKERFDRALESKLLGKRHITYANSDISNKELYINEIKSLKHEIKELRKEKNDTLNNYDTLEEETDDLKNRLQALEKELDAKNKIVNSRKVDDHSGCIEEREQMERKLAELERKLKTVKDQVLELENNSDVQSLKLRSKEDELKNLMNELNELKSNAEEKDTQLEFKKNELRKRTNELNELKIKSDEMDLQLKQKQNESKRLKDELNELETKFSENGSQSSAKENELKMLKNKIAELEEEISTKNSQLIAKEGKLASLMAQLTQLESKLNQRDSQLGSREEELKKTNDKLQKDIRIAREETVSKDERIIDLQKKVKQLENDLFVIKKTHSESKTITDNELESKDKLIKILENDLKVAQEKYSKMEKELKEREFNYKISESKLEDEKTTLNEKISNLAAENSQLKNKIEDNSTATHHMKENYEKQLESLRKDIEEYKESAKDSEDKIEELKIRIAENSAKVSEKRSKDIKQKDEQISDLTQNLKLQEDEISSLKSIIDRYKKDFNQLKSEQSNIQHDLNLQILNLENKLIESEDELKSLRDSQKIEIENWKRKYNNLSLENDRLLTEKESASDKEREISILNRKLDEMDKEKWNLQESKEKYKRELQKVITANDRLRREKEELNENSNNIRIMEDKMTRIKKNYLSEITSLQEENRRLEERLILNERRKDNDSTMQLNDIISYYKLKYHSEVRHNNDLKVINDYLNKVLALGTRRLRLDTRKGEHSLNISLPDDDELDRDYYNSHVYTRYHDYEYPLRFNLNRRGPYFERRLSFKTVALLVLACVRMKRIAFYRRSDDNRLRILRDRIESSSGRISW.

Position 18 is a phosphothreonine (Thr18). The tract at residues 23-110 (IKSKRNTTQT…RKRNLIDDLK (88 aa)) is disordered. Residues 28-46 (NTTQTQVVSPTKVPNANNG) show a composition bias toward polar residues. Positions 54–59 (KKRQRR) match the Nuclear localization signal motif. A Phosphoserine; by MPS1 modification is found at Ser60. Phosphothreonine; by MPS1 is present on residues Thr64 and Thr68. Residues 67–78 (STRLFSEASQFD) are compositionally biased toward polar residues. Ser80 bears the Phosphoserine mark. Over residues 96–110 (NVDKSRKRNLIDDLK) the composition is skewed to basic and acidic residues. Positions 164 to 791 (EIKSLKHEIK…NRRLEERLIL (628 aa)) form a coiled coil. Phosphoserine is present on Ser529. 2 consecutive short sequence motifs (nuclear localization signal) follow at residues 726 to 731 (KEKYKR) and 742 to 747 (RLRREK). The tract at residues 900–927 (SFKTVALLVLACVRMKRIAFYRRSDDNR) is calmodulin-binding.

Belongs to the SPC110 family. Homodimer. Component of the SPC110 complex containing at least CMD1, SPC29 and SCP110. Interacts with SPC97 and SPC98.

The protein localises to the nucleus. The protein resides in the cytoplasm. Its subcellular location is the cytoskeleton. It localises to the microtubule organizing center. It is found in the spindle pole body. Component of the spindle pole body (SPB) required for the proper execution of spindle pole body (SPB) duplication. Potential role in cross-linking filaments or anchoring other molecules. It is essential for growth. In Saccharomyces cerevisiae (strain ATCC 204508 / S288c) (Baker's yeast), this protein is Spindle pole body component 110 (SPC110).